The sequence spans 1019 residues: Alpha-mannosidase At3g26720 (1019 aa).

Residues 1 to 22 (MAVKCFSLYLILAAIVIGGVTS) form the signal peptide. Positions 47 and 49 each coordinate Zn(2+). A glycan (N-linked (GlcNAc...) asparagine) is linked at Asn64. Position 169 (Asp169) interacts with Zn(2+). N-linked (GlcNAc...) asparagine glycosylation is found at Asn278 and Asn336. His410 is a binding site for Zn(2+). Residues Cys466 and Cys474 are joined by a disulfide bond. N-linked (GlcNAc...) asparagine glycans are attached at residues Asn470, Asn638, Asn730, and Asn820. Cys824 and Cys829 are oxidised to a cystine.

Belongs to the glycosyl hydrolase 38 family. In terms of assembly, homodimer. The cofactor is Zn(2+).

It catalyses the reaction Hydrolysis of terminal, non-reducing alpha-D-mannose residues in alpha-D-mannosides.. Functionally, liberates mannose from p-nitrophenyl-alpha-D-mannoside in vitro. The polypeptide is Alpha-mannosidase At3g26720 (Arabidopsis thaliana (Mouse-ear cress)).